The chain runs to 614 residues: Fimbrin (614 aa).

EF-hand domains follow at residues 16–50 and 51–86; these read EEILTLTDQFNKLDVDGKGYLDQPTTIKAFEDSKK and GSYDEVREAIREVNVDSSGRVEPEDFVGIFNVLKKG. Aspartate 29, aspartate 31, tyrosine 35, threonine 40, aspartate 66, serine 68, arginine 70, and aspartate 75 together coordinate Ca(2+). 2 actin-binding regions span residues 98–368 and 369–614; these read TIKG…GLEP and LNEE…LMAV. Calponin-homology (CH) domains follow at residues 112 to 233, 261 to 364, 385 to 495, and 508 to 614; these read EEER…RRGL, LPPE…NTHP, EREA…RMNI, and TLSD…LMAV.

It is found in the cytoplasm. It localises to the cytoskeleton. The protein resides in the actin patch. Binds to actin, and functionally associates with actin structures involved in the development and maintenance of cell polarity. Plays a role in cytokinesis. Plays important roles in mating and in spore formation. This chain is Fimbrin (fim1), found in Schizosaccharomyces pombe (strain 972 / ATCC 24843) (Fission yeast).